The chain runs to 196 residues: Dual-action ribosomal maturation protein DarP (196 aa).

It belongs to the DarP family.

It is found in the cytoplasm. In terms of biological role, member of a network of 50S ribosomal subunit biogenesis factors which assembles along the 30S-50S interface, preventing incorrect 23S rRNA structures from forming. Promotes peptidyl transferase center (PTC) maturation. In Stenotrophomonas maltophilia (strain R551-3), this protein is Dual-action ribosomal maturation protein DarP.